The following is a 284-amino-acid chain: MKRGCAIAVMICGLITSVSAASAADLIVQEPVFEPLPQPALAGWYLRGDIGYNFKSKTGGKWNFWNQFEEPYRGVDDTFNYDDFSLKGGASYGVGVGYRFNDMLRTDLTLDYFRASINGRTNCPSYVKSSHGLNPVEDNCHYEDNSKASVWTAMANAYVDLPRVGPLTPYLGAGIGAAYVKYDTWKTSEICPTCTLQSDKDGFDSWRFAMALMAGVSYDLTDQLKLDLGYRYLRVNGGNAYGYDEQDRQVINQYGQGAGADGPQAKDNGFNIHTVRAGLRYEFR.

Residues 1–23 (MKRGCAIAVMICGLITSVSAASA) form the signal peptide.

The protein belongs to the surface antigen msp4 family.

This is an uncharacterized protein from Brucella suis biovar 1 (strain 1330).